A 408-amino-acid polypeptide reads, in one-letter code: uncharacterized protein (408 aa).

A helical membrane pass occupies residues tyrosine 56–leucine 76.

This sequence belongs to the mycobacterial PPE family.

It is found in the cell membrane. This is an uncharacterized protein from Mycobacterium bovis (strain ATCC BAA-935 / AF2122/97).